A 130-amino-acid polypeptide reads, in one-letter code: Small ribosomal subunit protein uS8 (130 aa).

Belongs to the universal ribosomal protein uS8 family. As to quaternary structure, part of the 30S ribosomal subunit. Contacts proteins S5 and S12.

One of the primary rRNA binding proteins, it binds directly to 16S rRNA central domain where it helps coordinate assembly of the platform of the 30S subunit. The sequence is that of Small ribosomal subunit protein uS8 from Moorella thermoacetica (strain ATCC 39073 / JCM 9320).